Consider the following 220-residue polypeptide: HTH-type transcriptional repressor KstR (220 aa).

The region spanning 36 to 96 is the HTH tetR-type domain; that stretch reads RERRKRILDA…SALGREFSRI (61 aa). A DNA-binding region (H-T-H motif) is located at residues 59–78; the sequence is QMRAVADRADVAVGTLYRYF.

Homodimer.

Functionally, controls the expression of genes used for utilizing diverse lipids as energy sources. The protein is HTH-type transcriptional repressor KstR (kstR) of Mycobacterium tuberculosis (strain ATCC 25618 / H37Rv).